We begin with the raw amino-acid sequence, 582 residues long: Threonine--tRNA ligase (582 aa).

A catalytic region spans residues Asp-185 to Pro-478. Zn(2+)-binding residues include Cys-278, His-329, and His-455.

It belongs to the class-II aminoacyl-tRNA synthetase family. Homodimer. The cofactor is Zn(2+).

The protein localises to the cytoplasm. It catalyses the reaction tRNA(Thr) + L-threonine + ATP = L-threonyl-tRNA(Thr) + AMP + diphosphate + H(+). In terms of biological role, catalyzes the attachment of threonine to tRNA(Thr) in a two-step reaction: L-threonine is first activated by ATP to form Thr-AMP and then transferred to the acceptor end of tRNA(Thr). Also edits incorrectly charged L-seryl-tRNA(Thr). The protein is Threonine--tRNA ligase of Borrelia garinii subsp. bavariensis (strain ATCC BAA-2496 / DSM 23469 / PBi) (Borreliella bavariensis).